The chain runs to 512 residues: ATP synthase subunit alpha (512 aa).

169–176 (GDRQTGKT) contacts ATP.

Belongs to the ATPase alpha/beta chains family. In terms of assembly, F-type ATPases have 2 components, CF(1) - the catalytic core - and CF(0) - the membrane proton channel. CF(1) has five subunits: alpha(3), beta(3), gamma(1), delta(1), epsilon(1). CF(0) has three main subunits: a(1), b(2) and c(9-12). The alpha and beta chains form an alternating ring which encloses part of the gamma chain. CF(1) is attached to CF(0) by a central stalk formed by the gamma and epsilon chains, while a peripheral stalk is formed by the delta and b chains.

The protein resides in the cell inner membrane. It carries out the reaction ATP + H2O + 4 H(+)(in) = ADP + phosphate + 5 H(+)(out). Its function is as follows. Produces ATP from ADP in the presence of a proton gradient across the membrane. The alpha chain is a regulatory subunit. This is ATP synthase subunit alpha from Ruegeria pomeroyi (strain ATCC 700808 / DSM 15171 / DSS-3) (Silicibacter pomeroyi).